Reading from the N-terminus, the 360-residue chain is MALSRVCWARAALWGSAVPPGLYVVRRLQFVRSGLTWGAPRSSKLHLSPKADVKSLISYVVTKTKVINGKYHRFLGRHFPRFYVPYTIFMKGLQMLWADGKKARRIKTNMWKHNIKFHQLPYREMEHLRQFRRDVTKCLFLGILSIPPFANYLVFLLMYLFPRQLLIRHFWTPKQQIDFLDIYHALRKQSHPEILCYLEKVVPLISDAGLQWHMTELCTKMQRGTHPAVHDILALRECFANHPLGMDQLRALQMKALCRAMLLTPYLPSVLLRHRLKTHTTVIHQLDKALAKLGVGQLTAQEVKSACYLRGLNSTHIAEERCRTWLGEWLQISCSLKETELSLLLHNVVLLSINYVGSRR.

The interval 1 to 110 (MALSRVCWAR…KKARRIKTNM (110 aa)) is required and sufficient for mitochondrial import. Topologically, residues 1-137 (MALSRVCWAR…LRQFRRDVTK (137 aa)) are cytoplasmic. The helical transmembrane segment at 138-158 (CLFLGILSIPPFANYLVFLLM) threads the bilayer. The Mitochondrial intermembrane segment spans residues 159–360 (YLFPRQLLIR…LSINYVGSRR (202 aa)). The region spanning 186–360 (LRKQSHPEIL…LSINYVGSRR (175 aa)) is the Letm1 RBD domain.

Interacts with BRI3BP. Interacts (via C-terminal) with SMARCA4; the interaction regulates transcriptional expression of thermogenic genes in brown adipose tissue.

It localises to the mitochondrion outer membrane. The protein localises to the nucleus. Its subcellular location is the mitochondrion inner membrane. Its function is as follows. Plays an essential role for mitochondrial structure and function, as well as thermogenesis of brown adipocytes. In brown adipose tissue also localizes in the nucleus where it interacts with the chromatin remodeler SMARCA4 to regulate thermogenic genes expression, such as UCP1. May regulate phagocytosis and inflammatory responses to lipopolysaccharide in macrophages. Involved in tumorigenesis and may function as a negative regulator of the p53/TP53. The sequence is that of LETM1 domain-containing protein 1 from Bos taurus (Bovine).